A 343-amino-acid polypeptide reads, in one-letter code: Aspartate-semialdehyde dehydrogenase (343 aa).

Residue 11–14 (TGMV) coordinates NADP(+). Arginine 109 contributes to the phosphate binding site. Residue cysteine 148 is the Acyl-thioester intermediate of the active site. Glutamine 174 provides a ligand contact to substrate. 177 to 178 (SG) serves as a coordination point for NADP(+). Glutamate 200 contributes to the substrate binding site. Position 203 (lysine 203) interacts with phosphate. Substrate is bound at residue arginine 233. The active-site Proton acceptor is the histidine 240. 321–322 (NT) lines the NADP(+) pocket.

It belongs to the aspartate-semialdehyde dehydrogenase family. As to quaternary structure, homodimer.

The enzyme catalyses L-aspartate 4-semialdehyde + phosphate + NADP(+) = 4-phospho-L-aspartate + NADPH + H(+). It participates in amino-acid biosynthesis; L-lysine biosynthesis via DAP pathway; (S)-tetrahydrodipicolinate from L-aspartate: step 2/4. The protein operates within amino-acid biosynthesis; L-methionine biosynthesis via de novo pathway; L-homoserine from L-aspartate: step 2/3. It functions in the pathway amino-acid biosynthesis; L-threonine biosynthesis; L-threonine from L-aspartate: step 2/5. In terms of biological role, catalyzes the NADPH-dependent formation of L-aspartate-semialdehyde (L-ASA) by the reductive dephosphorylation of L-aspartyl-4-phosphate. This is Aspartate-semialdehyde dehydrogenase from Archaeoglobus fulgidus (strain ATCC 49558 / DSM 4304 / JCM 9628 / NBRC 100126 / VC-16).